The sequence spans 130 residues: Small ribosomal subunit protein uS17m (130 aa).

This sequence belongs to the universal ribosomal protein uS17 family. In terms of assembly, component of the mitochondrial ribosome small subunit (28S) which comprises a 12S rRNA and about 30 distinct proteins.

Its subcellular location is the mitochondrion. The polypeptide is Small ribosomal subunit protein uS17m (MRPS17) (Bos taurus (Bovine)).